A 459-amino-acid polypeptide reads, in one-letter code: Nuclear distribution protein nudF 1 (459 aa).

The region spanning 9 to 41 (QAEELHKSIIAYLSANNLSNAASALRGELGLSE) is the LisH domain. A coiled-coil region spans residues 61–88 (TSIVRLQKKIMDLEARCGALQTELNNAT). WD repeat units follow at residues 114-155 (SHRN…TTLK), 157-197 (HTRA…KNIR), 201-240 (GHEH…CVKT), 243-282 (GHSG…NPEA), 288-349 (GHDH…LMTL), 351-390 (GHDN…KCVK), 395-440 (AHGR…PQVQ), and 442-459 (RCVV…IFAN).

The protein belongs to the WD repeat LIS1/nudF family. Self-associates. Interacts with nudE and dynein.

The protein localises to the cytoplasm. It localises to the cytoskeleton. The protein resides in the spindle pole. In terms of biological role, positively regulates the activity of the minus-end directed microtubule motor protein dynein. May enhance dynein-mediated microtubule sliding by targeting dynein to the microtubule plus end. Required for nuclear migration during vegetative growth as well as development. Required for retrograde early endosome (EE) transport from the hyphal tip. Required for localization of dynein to the mitotic spindle poles. Recruits additional proteins to the dynein complex at SPBs. The protein is Nuclear distribution protein nudF 1 of Talaromyces marneffei (strain ATCC 18224 / CBS 334.59 / QM 7333) (Penicillium marneffei).